We begin with the raw amino-acid sequence, 239 residues long: Fatty acid metabolism regulator protein (239 aa).

Residues 6–74 (KGPASFAEKY…HGKPTRVNNF (69 aa)) form the HTH gntR-type domain. The H-T-H motif DNA-binding region spans 34–53 (ERELSELIGVTRTTLREVLQ).

As to quaternary structure, homodimer.

The protein resides in the cytoplasm. In terms of biological role, multifunctional regulator of fatty acid metabolism. This Shewanella halifaxensis (strain HAW-EB4) protein is Fatty acid metabolism regulator protein.